Consider the following 546-residue polypeptide: Probable zinc metalloprotease EGY2, chloroplastic (546 aa).

The transit peptide at 1-64 (MQLPAMSCSP…QIRNRRFVCQ (64 aa)) directs the protein to the chloroplast. A disordered region spans residues 67–143 (TETEPDGDGN…DATPASDAQE (77 aa)). Acidic residues predominate over residues 69–86 (TEPDGDGNGDEEKEELGD). 2 stretches are compositionally biased toward polar residues: residues 89-110 (SSPS…TNAD) and 118-130 (NTEP…TVQN). 7 helical membrane passes run 257–277 (AVPE…TLLL), 301–321 (VYGA…HILA), 326–346 (GIKL…FGAI), 364–384 (AAGP…GFIL), 427–447 (PLVL…IPAG), 474–494 (LLGI…LIFF), and 514–534 (YISI…PYPF).

The protein belongs to the peptidase M50B family.

It is found in the plastid. It localises to the chloroplast membrane. Functionally, probable membrane-associated metalloprotease that may be involved in chloroplast development. The polypeptide is Probable zinc metalloprotease EGY2, chloroplastic (EGY2) (Oryza sativa subsp. japonica (Rice)).